Reading from the N-terminus, the 58-residue chain is Apelin receptor early endogenous ligand (58 aa).

Positions Met1–Ala22 are cleaved as a signal peptide.

It belongs to the Elabela/Toddler family. As to quaternary structure, interacts with aplnra and aplnrb. As to expression, expressed ubiquitously during late blastula and gastrula stages and becomes restricted to the lateral mesoderm, endoderm, and anterior and posterior notochord after gastrulation.

It is found in the secreted. It localises to the extracellular space. Functionally, peptide hormone that functions as endogenous ligand for the G-protein-coupled apelin receptor (aplnra and/or aplnrb), that plays a role in the regulation of normal cardiovascular function and fluid homeostasis. Functions as a balanced agonist activating both G(i) protein pathway and beta-arrestin pathway of APLNR. Downstream G proteins activation, apelin can inhibit cAMP production and activate key intracellular effectors such as ERKs. On the other hand, APLNR activation induces beta-arrestin recruitment to the membrane leading to desensitization and internalization of the receptor. Required for mesendodermal differentiation, blood vessels formation and heart morphogenesis during early development and for adult cardiovascular homeostasis. Acts as a motogen by promoting mesendodermal cell migration during gastrulation by binding and activating the apelin receptor. Acts as an early embryonic regulator of cellular movement with a role in migration and development of cardiac progenitor cells. May act as a chemoattractant for the activation of angioblast migration toward the embryonic midline, i.e. the position of the future vessel formation, during vasculogenesis. Positively regulates sinus venosus (SV)-derived endothelial cells migration into the developing heart to promote coronary blood vessel sprouting. Involved in cardioprotective functions during heart failure. Mediates myocardial contractility in an ERK1/2-dependent manner. The chain is Apelin receptor early endogenous ligand from Danio rerio (Zebrafish).